A 585-amino-acid chain; its full sequence is Zinc finger protein C11D3.17 (585 aa).

2 consecutive C2H2-type zinc fingers follow at residues 31–53 (FPCDQCAKRFTRHENLTRHKACH) and 59–82 (IPCPYCEIKCKRKDLLKRHIQRFH). Position 553 is a phosphothreonine (Thr-553).

Its subcellular location is the nucleus. The protein is Zinc finger protein C11D3.17 of Schizosaccharomyces pombe (strain 972 / ATCC 24843) (Fission yeast).